The primary structure comprises 260 residues: Large ribosomal subunit protein uL4 (260 aa).

This sequence belongs to the universal ribosomal protein uL4 family. As to quaternary structure, part of the 50S ribosomal subunit.

Its function is as follows. One of the primary rRNA binding proteins, this protein initially binds near the 5'-end of the 23S rRNA. It is important during the early stages of 50S assembly. It makes multiple contacts with different domains of the 23S rRNA in the assembled 50S subunit and ribosome. In terms of biological role, forms part of the polypeptide exit tunnel. The polypeptide is Large ribosomal subunit protein uL4 (Methanopyrus kandleri (strain AV19 / DSM 6324 / JCM 9639 / NBRC 100938)).